The primary structure comprises 164 residues: Large ribosomal subunit protein bL19 (164 aa).

A disordered region spans residues 144–164 (EAEKQTEVQAEPKIEKSEEKK).

This sequence belongs to the bacterial ribosomal protein bL19 family.

In terms of biological role, this protein is located at the 30S-50S ribosomal subunit interface and may play a role in the structure and function of the aminoacyl-tRNA binding site. This chain is Large ribosomal subunit protein bL19, found in Pelagibacter ubique (strain HTCC1062).